The chain runs to 355 residues: 3-dehydroquinate synthase (355 aa).

Residues 66 to 71, 100 to 104, 124 to 125, lysine 136, lysine 145, and 163 to 166 each bind NAD(+); these read SGETTK, GATGD, TT, and FLET. The Zn(2+) site is built by glutamate 178, histidine 242, and histidine 256.

Belongs to the sugar phosphate cyclases superfamily. Dehydroquinate synthase family. It depends on Co(2+) as a cofactor. Requires Zn(2+) as cofactor. The cofactor is NAD(+).

It localises to the cytoplasm. It catalyses the reaction 7-phospho-2-dehydro-3-deoxy-D-arabino-heptonate = 3-dehydroquinate + phosphate. It participates in metabolic intermediate biosynthesis; chorismate biosynthesis; chorismate from D-erythrose 4-phosphate and phosphoenolpyruvate: step 2/7. In terms of biological role, catalyzes the conversion of 3-deoxy-D-arabino-heptulosonate 7-phosphate (DAHP) to dehydroquinate (DHQ). This Staphylococcus saprophyticus subsp. saprophyticus (strain ATCC 15305 / DSM 20229 / NCIMB 8711 / NCTC 7292 / S-41) protein is 3-dehydroquinate synthase.